We begin with the raw amino-acid sequence, 326 residues long: tRNA-dihydrouridine(16) synthase (326 aa).

Residues 8–10 and Gln69 contribute to the FMN site; that span reads PME. The Proton donor role is filled by Cys99. FMN-binding positions include Lys140, 200–202, and 224–225; these read NGE and GR.

This sequence belongs to the Dus family. DusC subfamily. Requires FMN as cofactor.

The enzyme catalyses 5,6-dihydrouridine(16) in tRNA + NADP(+) = uridine(16) in tRNA + NADPH + H(+). It carries out the reaction 5,6-dihydrouridine(16) in tRNA + NAD(+) = uridine(16) in tRNA + NADH + H(+). In terms of biological role, catalyzes the synthesis of 5,6-dihydrouridine (D), a modified base found in the D-loop of most tRNAs, via the reduction of the C5-C6 double bond in target uridines. Specifically modifies U16 in tRNAs. The polypeptide is tRNA-dihydrouridine(16) synthase (Ralstonia nicotianae (strain ATCC BAA-1114 / GMI1000) (Ralstonia solanacearum)).